The following is a 380-amino-acid chain: Glutamate 5-kinase (380 aa).

Lysine 15 contributes to the ATP binding site. Substrate contacts are provided by serine 59, aspartate 146, and asparagine 158. ATP is bound at residue 178–179 (TD). In terms of domain architecture, PUA spans 285–363 (RGSVTVDAGA…AEFERLLGYA (79 aa)).

It belongs to the glutamate 5-kinase family.

It is found in the cytoplasm. It carries out the reaction L-glutamate + ATP = L-glutamyl 5-phosphate + ADP. Its pathway is amino-acid biosynthesis; L-proline biosynthesis; L-glutamate 5-semialdehyde from L-glutamate: step 1/2. Catalyzes the transfer of a phosphate group to glutamate to form L-glutamate 5-phosphate. This is Glutamate 5-kinase from Acidovorax ebreus (strain TPSY) (Diaphorobacter sp. (strain TPSY)).